Here is a 133-residue protein sequence, read N- to C-terminus: L-ectoine synthase (133 aa).

The protein belongs to the ectoine synthase family.

The catalysed reaction is (2S)-4-acetamido-2-aminobutanoate = L-ectoine + H2O. It functions in the pathway amine and polyamine biosynthesis; ectoine biosynthesis; L-ectoine from L-aspartate 4-semialdehyde: step 3/3. Catalyzes the circularization of gamma-N-acetyl-alpha,gamma-diaminobutyric acid (ADABA) to ectoine (1,4,5,6-tetrahydro-2-methyl-4-pyrimidine carboxylic acid), which is an excellent osmoprotectant. The protein is L-ectoine synthase of Bordetella petrii (strain ATCC BAA-461 / DSM 12804 / CCUG 43448).